A 159-amino-acid chain; its full sequence is Developmental pluripotency-associated protein 3 (159 aa).

Disordered stretches follow at residues 1 to 31 (MDPS…GASQ) and 140 to 159 (GWDP…PLQP). Over residues 149–159 (IGNQDTKPLQP) the composition is skewed to polar residues.

As to expression, low expression in testis, ovary and thymus. Expressed in embryonic stem and carcinoma cells. Highly expressed in testicular germ cell tumors.

The protein resides in the nucleus. The protein localises to the cytoplasm. In terms of biological role, primordial germ cell (PGCs)-specific protein involved in epigenetic chromatin reprogramming in the zygote following fertilization. In zygotes, DNA demethylation occurs selectively in the paternal pronucleus before the first cell division, while the adjacent maternal pronucleus and certain paternally-imprinted loci are protected from this process. Participates in protection of DNA methylation in the maternal pronucleus by preventing conversion of 5mC to 5hmC: specifically recognizes and binds histone H3 dimethylated at 'Lys-9' (H3K9me2) on maternal genome, and protects maternal genome from TET3-mediated conversion to 5hmC and subsequent DNA demethylation. Does not bind paternal chromatin, which is mainly packed into protamine and does not contain much H3K9me2 mark. Also protects imprinted loci that are marked with H3K9me2 in mature sperm from DNA demethylation in early embryogenesis. May be important for the totipotent/pluripotent states continuing through preimplantation development. Also involved in chromatin condensation in oocytogenesis. In Homo sapiens (Human), this protein is Developmental pluripotency-associated protein 3 (DPPA3).